The chain runs to 302 residues: N-acetylmuramic acid 6-phosphate etherase (302 aa).

Residues 55–218 (AYPKFDQGGR…STGIMVKSGK (164 aa)) enclose the SIS domain. Residue Glu83 is the Proton donor of the active site. Glu114 is an active-site residue.

Belongs to the GCKR-like family. MurNAc-6-P etherase subfamily. As to quaternary structure, homodimer.

The enzyme catalyses N-acetyl-D-muramate 6-phosphate + H2O = N-acetyl-D-glucosamine 6-phosphate + (R)-lactate. It participates in amino-sugar metabolism; N-acetylmuramate degradation. Specifically catalyzes the cleavage of the D-lactyl ether substituent of MurNAc 6-phosphate, producing GlcNAc 6-phosphate and D-lactate. The sequence is that of N-acetylmuramic acid 6-phosphate etherase from Levilactobacillus brevis (strain ATCC 367 / BCRC 12310 / CIP 105137 / JCM 1170 / LMG 11437 / NCIMB 947 / NCTC 947) (Lactobacillus brevis).